We begin with the raw amino-acid sequence, 252 residues long: 2-succinyl-6-hydroxy-2,4-cyclohexadiene-1-carboxylate synthase (252 aa).

The protein belongs to the AB hydrolase superfamily. MenH family. Monomer.

The catalysed reaction is 5-enolpyruvoyl-6-hydroxy-2-succinyl-cyclohex-3-ene-1-carboxylate = (1R,6R)-6-hydroxy-2-succinyl-cyclohexa-2,4-diene-1-carboxylate + pyruvate. It participates in quinol/quinone metabolism; 1,4-dihydroxy-2-naphthoate biosynthesis; 1,4-dihydroxy-2-naphthoate from chorismate: step 3/7. The protein operates within quinol/quinone metabolism; menaquinone biosynthesis. In terms of biological role, catalyzes a proton abstraction reaction that results in 2,5-elimination of pyruvate from 2-succinyl-5-enolpyruvyl-6-hydroxy-3-cyclohexene-1-carboxylate (SEPHCHC) and the formation of 2-succinyl-6-hydroxy-2,4-cyclohexadiene-1-carboxylate (SHCHC). The sequence is that of 2-succinyl-6-hydroxy-2,4-cyclohexadiene-1-carboxylate synthase from Salmonella schwarzengrund (strain CVM19633).